The chain runs to 341 residues: S-adenosylmethionine:tRNA ribosyltransferase-isomerase (341 aa).

The protein belongs to the QueA family. In terms of assembly, monomer.

It localises to the cytoplasm. It catalyses the reaction 7-aminomethyl-7-carbaguanosine(34) in tRNA + S-adenosyl-L-methionine = epoxyqueuosine(34) in tRNA + adenine + L-methionine + 2 H(+). It functions in the pathway tRNA modification; tRNA-queuosine biosynthesis. Functionally, transfers and isomerizes the ribose moiety from AdoMet to the 7-aminomethyl group of 7-deazaguanine (preQ1-tRNA) to give epoxyqueuosine (oQ-tRNA). In Clostridium perfringens (strain ATCC 13124 / DSM 756 / JCM 1290 / NCIMB 6125 / NCTC 8237 / Type A), this protein is S-adenosylmethionine:tRNA ribosyltransferase-isomerase.